Here is a 55-residue protein sequence, read N- to C-terminus: UPF0391 membrane protein Sfum_0248 (55 aa).

The next 2 helical transmembrane spans lie at 4–24 and 28–48; these read WALI…GGII and AWIA…SLLS.

This sequence belongs to the UPF0391 family.

The protein localises to the cell membrane. This Syntrophobacter fumaroxidans (strain DSM 10017 / MPOB) protein is UPF0391 membrane protein Sfum_0248.